The following is a 96-amino-acid chain: UPF0235 protein ESA_00387 (96 aa).

It belongs to the UPF0235 family.

The polypeptide is UPF0235 protein ESA_00387 (Cronobacter sakazakii (strain ATCC BAA-894) (Enterobacter sakazakii)).